We begin with the raw amino-acid sequence, 962 residues long: MHFILDPEDPGAPQASTEGKPKHRRLRGGVVMAAPPARPDHTRLLQICLLLGVLVEIRAEQILYSVFEEQEEGSVVGNIAKDLGLAPRELAERGVRIVSRGRTQLFALNPRSGTLVTAGRIDREELCDRSPNCVTNLEILLEDTVKILRVEVEIIDVNDNPPSFGTEQREIKVAENENPGARFPLPEAFDPDVGVNSLQGYQLNSNGYFSLDVQSGADGIKYPELVLERALDREEEAVHHLVLTAFDGGDPVRSGTARILIILVDTNDNAPVFTQPEYHVSVRENVPVGTRLLTVKATDPDEGANGDVTYSFRKVRDKISQLFQLNSLSGDITILGGLDYEDSGFYDIDVEAHDGPGLRARSKVLVTVLDENDNAPEVTVTSLTSSVQESSSPGTVIALFNVHDSDSGGNGLVTCSIPDNLPFTLEKTYGNYYRLLTHRTLDREEVSEYNITVTATDQGTPPLSTETHISLQVMDINDNPPTFPHASYSAYIPENNPRGASILSMTAQDPDSGDNARITYSLAEDTFQGAPLSSYVSINSNTGILYALCSFDYEQFRDLQLLMTASDSGDPPLSSNVSLSLFVLDQNDNVPEILYPTFPTDGSTGVELAPRSADSGYLVTKVVAVDRDSGQNAWLSYSLLKSSEPGLFAVGLHTGEVRTARALLDRDALKQRLVVVVQDHGQPPLSATVTLTVAVADSIPDVLADLGSLKPSADPDDSGLTLYLVVAVAAVSCVFLAFVTVLLALKLRRWHKSRLLHAEGSRLAGVPASHFVGVDGVRAFLQTYSHEVSLTADSRKSHLIFSQPSYADTLISRESCEKSEPLLITQDLLETKGDPNLQQAPPNTDWRFSQAQRPGTSGSQNGDDTGTWPNNQFDTEMLQAMILASASEAADGSSTLGGGAGTMGLSARYGPQFTLQHVPDYRQNVYIPGSNATLTNAAGKRDGKAPAGGNGNKKKSGKKEKK.

The tract at residues 1–24 is disordered; that stretch reads MHFILDPEDPGAPQASTEGKPKHR. The first 59 residues, 1–59, serve as a signal peptide directing secretion; it reads MHFILDPEDPGAPQASTEGKPKHRRLRGGVVMAAPPARPDHTRLLQICLLLGVLVEIRA. Cadherin domains lie at 60–164, 165–273, 274–378, 379–483, 484–598, and 601–713; these read EQIL…PPSF, GTEQ…APVF, TQPE…APEV, TVTS…PPTF, PHAS…YPTF, and DGST…KPSA. Residues 60 to 723 lie on the Extracellular side of the membrane; that stretch reads EQILYSVFEE…DPDDSGLTLY (664 aa). N450 and N576 each carry an N-linked (GlcNAc...) asparagine glycan. The chain crosses the membrane as a helical span at residues 724 to 744; that stretch reads LVVAVAAVSCVFLAFVTVLLA. Residues 745–962 are Cytoplasmic-facing; the sequence is LKLRRWHKSR…KKKSGKKEKK (218 aa). 2 disordered regions span residues 832–871 and 932–962; these read KGDP…WPNN and ATLT…KEKK. Residues 836-871 show a composition bias toward polar residues; that stretch reads NLQQAPPNTDWRFSQAQRPGTSGSQNGDDTGTWPNN. Residues 952 to 962 are compositionally biased toward basic residues; it reads NKKKSGKKEKK.

The protein localises to the cell membrane. Its function is as follows. Potential calcium-dependent cell-adhesion protein. May be involved in the establishment and maintenance of specific neuronal connections in the brain. The sequence is that of Protocadherin gamma-A4 (PCDHGA4) from Homo sapiens (Human).